Reading from the N-terminus, the 214-residue chain is ER lumen protein-retaining receptor 3 (214 aa).

Topologically, residues Met-1 to Phe-4 are lumenal. The chain crosses the membrane as a helical span at residues Arg-5–Trp-24. At Lys-25–Ile-32 the chain is on the cytoplasmic side. Residues Ser-33–Phe-52 form a helical membrane-spanning segment. An interaction with the K-D-E-L motif on target proteins region spans residues Arg-47–Tyr-48. Topologically, residues Thr-53–Pro-58 are lumenal. A helical membrane pass occupies residues Tyr-59–Tyr-79. At Gly-80 to Thr-92 the chain is on the cytoplasmic side. A helical transmembrane segment spans residues Phe-93–Asn-110. Residues Tyr-111–Leu-116 lie on the Lumenal side of the membrane. A helical transmembrane segment spans residues Glu-117–Leu-135. Topologically, residues Phe-136–Thr-149 are cytoplasmic. The chain crosses the membrane as a helical span at residues His-150 to Trp-168. The tract at residues Arg-159 to Arg-169 is interaction with the K-D-E-L motif on target proteins. Over Arg-169–Gln-178 the chain is Lumenal. The helical transmembrane segment at Ile-179–Val-199 threads the bilayer. Residues Thr-200–Val-214 are Cytoplasmic-facing. The important for recycling of cargo proteins with the sequence motif K-D-E-L from the Golgi to the endoplasmic reticulum stretch occupies residues Lys-204–Lys-207.

This sequence belongs to the ERD2 family.

It is found in the endoplasmic reticulum membrane. Its subcellular location is the golgi apparatus membrane. The protein localises to the cytoplasmic vesicle. The protein resides in the COPI-coated vesicle membrane. Receptor for the C-terminal sequence motif K-D-E-L that is present on endoplasmic reticulum resident proteins and that mediates their recycling from the Golgi back to the endoplasmic reticulum. This is ER lumen protein-retaining receptor 3 (kdelr3) from Xenopus laevis (African clawed frog).